A 1482-amino-acid chain; its full sequence is Lysine-specific demethylase rbr-2 (1482 aa).

Residues M1–M45 form a disordered region. Low complexity predominate over residues T11–T20. Residues N30–P41 are compositionally biased toward polar residues. Positions A61–P102 constitute a JmjN domain. Positions V126–K223 constitute an ARID domain. The disordered stretch occupies residues Y244–N316. Residues M251 to E264 are compositionally biased toward basic and acidic residues. Residues G277–P288 are compositionally biased toward basic residues. The segment at Q322–S374 adopts a PHD-type 1 zinc-finger fold. A JmjC domain is found at Q471–S637. Fe cation is bound by residues H517, D520, and H605. The PHD-type 2 zinc finger occupies L1206–G1260. The segment at Q1361–Q1403 is disordered. Residues F1416 to H1471 form a PHD-type 3 zinc finger.

This sequence belongs to the JARID1 histone demethylase family. Fe(2+) is required as a cofactor.

The protein localises to the nucleus. The enzyme catalyses N(6),N(6),N(6)-trimethyl-L-lysyl(4)-[histone H3] + 3 2-oxoglutarate + 3 O2 = L-lysyl(4)-[histone H3] + 3 formaldehyde + 3 succinate + 3 CO2. Its function is as follows. Histone demethylase that specifically demethylates 'Lys-4' of histone H3, thereby playing a central role in histone code. Does not demethylate histone H3 'Lys-9', H3 'Lys-27', H3 'Lys-36', H3 'Lys-79' or H4 'Lys-20'. Demethylates trimethylated and dimethylated but not monomethylated H3 'Lys-4'. Involved in larval development and vulva formation. This chain is Lysine-specific demethylase rbr-2 (rbr-2), found in Caenorhabditis briggsae.